The sequence spans 245 residues: Lytic switch protein BZLF1 (245 aa).

Residues 1 to 167 (MMDPNSTSED…RTRKPLQPES (167 aa)) form a transactivation region. A phosphothreonine mark is found at Thr14 and Thr159. The segment at 140–167 (QLADIGAPQPAPAAAPARRTRKPLQPES) is disordered. The Bipartite nuclear localization signal signature appears at 157–194 (RRTRKPLQPESLEECDSELDIKRYKNRVASRKCRAKFK). Ser167, Ser173, and Ser186 each carry phosphoserine. A basic motif region spans residues 178–195 (KRYKNRVASRKCRAKFKH). The bZIP domain maps to 178-228 (KRYKNRVASRKCRAKFKHLLQHYREVASAKSSENDRLRLLLKQMCPSLDVD). The interval 196–228 (LLQHYREVASAKSSENDRLRLLLKQMCPSLDVD) is leucine-zipper. Residues 229-245 (SIIPRTPDVLHEDLLNF) form an accessory activation domain region.

It belongs to the bZIP family. In terms of assembly, homodimer. Interacts (via b-ZIP domain) with the DNA polymerase processivity factor BMRF1 (via N-terminus); this interaction may inhibit BZLF1-induced transcription of the BMRF1 promoter. Interacts with human UBN1, CRTC2 and RACK1. Interacts (via N-terminus) with human PAX5 (via N-terminus); this interaction inhibits BZLF1-mediated lytic viral reactivation. Interacts (via leucine-zipper domain) with host CEBPA; this interaction induces G1 host cell cycle arrest. Interacts (via C-terminus) with host TP53BP1 (via C-terminus); this interaction is involved in the activation of the viral lytic cycle. Interacts with host chromatin-remodeling ATPase INO80; this interaction participates to the activation of early lytic viral genes by BZLF1. Interacts with host regulator of chromatin SMARCA5/hSNF2H; this interaction participates to the activation of early lytic viral genes by BZLF1. Interacts with host PLSCR1/Phospholipid scramblase 1; this interaction negatively regulates the transcriptional regulatory activity of BZLF1 by preventing the formation of the BZLF1-CBP complex.

The protein resides in the host nucleus. Its function is as follows. Transcription factor that acts as a molecular switch to induce the transition from the latent to the lytic or productive phase of the virus cycle. Mediates the switch from the latent to the lytic cycle of infection in cells containing a highly methylated viral genome. Probably binds to silenced chromatin and recruits host chromatin-remodeling enzymes. Regulates this switch by binding to 2 types of ZEBRA response elements (ZREs): the CpG-free AP-1 like elements (latency) and the methylated CpG-containing elements (lytic replication). Activates preferentially the methylated forms of the viral lytic R (BRLF1) and Na (BRRF1) gene promoters, the latters being the first genes activated during Z-mediated reactivation in latently infected cells. BZLF1 and BRLF1 act together to trigger lytic replication. Also binds the lytic origin of replication, oriLyt. Induces G1 cell cycle arrest by stabilizing the host CCAAT/enhancer binding protein CEBPA. This function is important because the lytic cycle preferentially takes place in host cells arrested in G1. This Epstein-Barr virus (strain AG876) (HHV-4) protein is Lytic switch protein BZLF1.